The sequence spans 294 residues: Glycine--tRNA ligase alpha subunit (294 aa).

This sequence belongs to the class-II aminoacyl-tRNA synthetase family. In terms of assembly, tetramer of two alpha and two beta subunits.

It is found in the cytoplasm. It carries out the reaction tRNA(Gly) + glycine + ATP = glycyl-tRNA(Gly) + AMP + diphosphate. This Lawsonia intracellularis (strain PHE/MN1-00) protein is Glycine--tRNA ligase alpha subunit.